A 476-amino-acid chain; its full sequence is Bifunctional protein HldE (476 aa).

The interval 1-319 (MKVSLPAFEK…RALSVNHGES (319 aa)) is ribokinase. 195-198 (NMGE) contacts ATP. The active site involves D264. The tract at residues 345-476 (MTNGCFDILH…SIIENIMANQ (132 aa)) is cytidylyltransferase.

It in the N-terminal section; belongs to the carbohydrate kinase PfkB family. In the C-terminal section; belongs to the cytidylyltransferase family. Homodimer.

It carries out the reaction D-glycero-beta-D-manno-heptose 7-phosphate + ATP = D-glycero-beta-D-manno-heptose 1,7-bisphosphate + ADP + H(+). It catalyses the reaction D-glycero-beta-D-manno-heptose 1-phosphate + ATP + H(+) = ADP-D-glycero-beta-D-manno-heptose + diphosphate. Its pathway is nucleotide-sugar biosynthesis; ADP-L-glycero-beta-D-manno-heptose biosynthesis; ADP-L-glycero-beta-D-manno-heptose from D-glycero-beta-D-manno-heptose 7-phosphate: step 1/4. It participates in nucleotide-sugar biosynthesis; ADP-L-glycero-beta-D-manno-heptose biosynthesis; ADP-L-glycero-beta-D-manno-heptose from D-glycero-beta-D-manno-heptose 7-phosphate: step 3/4. Catalyzes the phosphorylation of D-glycero-D-manno-heptose 7-phosphate at the C-1 position to selectively form D-glycero-beta-D-manno-heptose-1,7-bisphosphate. Functionally, catalyzes the ADP transfer from ATP to D-glycero-beta-D-manno-heptose 1-phosphate, yielding ADP-D-glycero-beta-D-manno-heptose. This is Bifunctional protein HldE from Shewanella sediminis (strain HAW-EB3).